Here is an 841-residue protein sequence, read N- to C-terminus: GRIP1-associated protein 1 (841 aa).

Residue Ala-2 is modified to N-acetylalanine. Coiled coils occupy residues 4 to 161 and 208 to 641; these read ALSE…YGKE and EQLQ…NSKS. 2 disordered regions span residues 532–551 and 558–580; these read AEES…KQCR and LKGK…EERD. Residues Ser-655, Ser-666, Ser-668, Ser-669, Ser-688, Ser-690, Ser-691, and Ser-692 each carry the phosphoserine modification. The tract at residues 681–706 is disordered; it reads SSAVPARSLSSSPQAQPPRPAELSDE. Residues 682-694 are compositionally biased toward low complexity; the sequence is SAVPARSLSSSPQ. Coiled coils occupy residues 701–735 and 785–814; these read AELS…LEVS and DENL…KDME.

Interacts with GRIP1, GRIP2 and AMPA receptors. Interacts (via C-terminus) with MAPK8/JNK1 and MAP3K1/MEKK1; the interaction promotes MAP3K1-mediated phosphorylation of MAPK8. Interacts (via N-terminus) with RAB4A (in GTP-bound form). Interacts (via C-terminus) with STX12. Post-translationally, proteolytically cleaved by caspase-3. A minor C-terminal proteolytic fragment of 30 kDa is produced. Proteolytic cleavage is required for JNK signaling activation.

The protein resides in the early endosome membrane. The protein localises to the recycling endosome membrane. It is found in the cell projection. It localises to the axon. Its subcellular location is the dendrite. The protein resides in the synapse. In terms of biological role, regulates the endosomal recycling back to the neuronal plasma membrane, possibly by connecting early and late recycling endosomal domains and promoting segregation of recycling endosomes from early endosomal membranes. Involved in the localization of recycling endosomes to dendritic spines, thereby playing a role in the maintenance of dendritic spine morphology. Required for the activity-induced AMPA receptor recycling to dendrite membranes and for long-term potentiation and synaptic plasticity. Its function is as follows. Functions as a scaffold protein to facilitate MAP3K1/MEKK1-mediated activation of the JNK1 kinase by phosphorylation, possibly by bringing MAP3K1/MEKK1 and JNK1 in close proximity. In Homo sapiens (Human), this protein is GRIP1-associated protein 1.